We begin with the raw amino-acid sequence, 815 residues long: MEKTPATGSAVAPPPVEYGTDSITKLEGREAVRKRPGMYIGDTMAYGLHKLVYEVVDNAVDESLAGHCTDIEVVIHVDGSLSVQDNGRGIPVGPHPKFPGKDTLEVVLTELHAGSKFGNGAYKVSGGLHGVGVTCVNFLSEWFKVRVHRNGIVYEQAYAQGVPDTPPREVGTTDKRGTHIAFKPDATVMELVEFNFETLSQRLRELAFLNAGLHIVVRDERTNKEHDFKFDGGISSFVEYLNKSKQTLHDKPISFSTEREGVMLDIAMQWNDGYDERIYTFANNINTHEGGSHLSGFKAALTRTLNSYAEKGSLWKDLKETPTGEDAREGLSAVISVKLTNPQFEGQTKTKLGNSEVKGLVEQMVNDQLGSFLEETPMVAKKVVAKIGDACRARLAARKARETVRRKGVLDGGGLPGKLADCQIRDPNESELYIVEGDSAGGSAKQGRDRRNQAILPLRGKILNVEKLLREMLTSAEIVTLITALGNGIGAEDYDPEKARYHRIFLMTDADVDGSHIRTLLLTSSSGRCRSSCRRAISTSRSRRSYKVTRNKKDQYVKDEHALNEYLLKIASEHARVLTPGGELGGAELKALLEKVITYEERLEKQAKRRDARVVDALVQGARLSAETLTGRGCPGGGGEGRLMTPSSAACRTCWAACATSWCRTPSTTPRSWCSTPTRMEPCGRRCSTTPSCRRRSTWSCRLCAEHLRGAGQGAVQGPRGRGEITVFSVQEVLAAVRKDAQRGLGLQRYKGLGEMNPEQLWDTTMNPATRTLLQVRVEDAVESDEIFSLLMGEAVEPRREFIERNALDVQNLDI.

Residues Met1–Asp21 form a disordered region. The region spanning Ser430 to Ser545 is the Toprim domain. Residues Glu436, Asp509, and Asp511 each coordinate Mg(2+).

It belongs to the type II topoisomerase GyrB family. Heterotetramer, composed of two GyrA and two GyrB chains. In the heterotetramer, GyrA contains the active site tyrosine that forms a transient covalent intermediate with DNA, while GyrB binds cofactors and catalyzes ATP hydrolysis. Mg(2+) serves as cofactor. It depends on Mn(2+) as a cofactor. Requires Ca(2+) as cofactor.

The protein localises to the cytoplasm. The enzyme catalyses ATP-dependent breakage, passage and rejoining of double-stranded DNA.. In terms of biological role, a type II topoisomerase that negatively supercoils closed circular double-stranded (ds) DNA in an ATP-dependent manner to modulate DNA topology and maintain chromosomes in an underwound state. Negative supercoiling favors strand separation, and DNA replication, transcription, recombination and repair, all of which involve strand separation. Also able to catalyze the interconversion of other topological isomers of dsDNA rings, including catenanes and knotted rings. Type II topoisomerases break and join 2 DNA strands simultaneously in an ATP-dependent manner. The protein is DNA gyrase subunit B of Myxococcus xanthus.